The following is a 409-amino-acid chain: Arginine deiminase (409 aa).

Cys399 acts as the Amidino-cysteine intermediate in catalysis.

It belongs to the arginine deiminase family.

The protein resides in the cytoplasm. It carries out the reaction L-arginine + H2O = L-citrulline + NH4(+). It functions in the pathway amino-acid degradation; L-arginine degradation via ADI pathway; carbamoyl phosphate from L-arginine: step 1/2. The polypeptide is Arginine deiminase (Borrelia garinii subsp. bavariensis (strain ATCC BAA-2496 / DSM 23469 / PBi) (Borreliella bavariensis)).